A 355-amino-acid chain; its full sequence is UDP-N-acetylglucosamine--N-acetylmuramyl-(pentapeptide) pyrophosphoryl-undecaprenol N-acetylglucosamine transferase (355 aa).

UDP-N-acetyl-alpha-D-glucosamine-binding positions include 15–17 (TGG), Asn127, Arg163, Ser191, Ile244, 263–268 (ALTVSE), and Gln288.

This sequence belongs to the glycosyltransferase 28 family. MurG subfamily.

It is found in the cell inner membrane. The enzyme catalyses di-trans,octa-cis-undecaprenyl diphospho-N-acetyl-alpha-D-muramoyl-L-alanyl-D-glutamyl-meso-2,6-diaminopimeloyl-D-alanyl-D-alanine + UDP-N-acetyl-alpha-D-glucosamine = di-trans,octa-cis-undecaprenyl diphospho-[N-acetyl-alpha-D-glucosaminyl-(1-&gt;4)]-N-acetyl-alpha-D-muramoyl-L-alanyl-D-glutamyl-meso-2,6-diaminopimeloyl-D-alanyl-D-alanine + UDP + H(+). It functions in the pathway cell wall biogenesis; peptidoglycan biosynthesis. In terms of biological role, cell wall formation. Catalyzes the transfer of a GlcNAc subunit on undecaprenyl-pyrophosphoryl-MurNAc-pentapeptide (lipid intermediate I) to form undecaprenyl-pyrophosphoryl-MurNAc-(pentapeptide)GlcNAc (lipid intermediate II). The chain is UDP-N-acetylglucosamine--N-acetylmuramyl-(pentapeptide) pyrophosphoryl-undecaprenol N-acetylglucosamine transferase from Escherichia coli (strain 55989 / EAEC).